Reading from the N-terminus, the 688-residue chain is Methionine--tRNA ligase (688 aa).

Residues 13-23 (PYANGQIHIGH) carry the 'HIGH' region motif. Positions 144, 147, 157, and 160 each coordinate Zn(2+). The 'KMSKS' region motif lies at 335-339 (KMSKS). ATP is bound at residue K338. The tRNA-binding domain occupies 582-688 (DFAKIDLRVA…SGAVPGMRIG (107 aa)).

It belongs to the class-I aminoacyl-tRNA synthetase family. MetG type 1 subfamily. In terms of assembly, homodimer. Zn(2+) is required as a cofactor.

It is found in the cytoplasm. It catalyses the reaction tRNA(Met) + L-methionine + ATP = L-methionyl-tRNA(Met) + AMP + diphosphate. In terms of biological role, is required not only for elongation of protein synthesis but also for the initiation of all mRNA translation through initiator tRNA(fMet) aminoacylation. This Cupriavidus pinatubonensis (strain JMP 134 / LMG 1197) (Cupriavidus necator (strain JMP 134)) protein is Methionine--tRNA ligase.